A 740-amino-acid polypeptide reads, in one-letter code: Ethylene receptor 1 (740 aa).

3 helical membrane passes run 23 to 43, 54 to 74, and 92 to 112; these read ISDF…IYFV, VLVQ…INLW, and VLTA…IPDL. Residues Cys-65 and His-69 each coordinate Cu cation. The region spanning 158–307 is the GAF domain; sequence DRHTILKTTL…VVADQVAVAL (150 aa). The region spanning 350–588 is the Histidine kinase domain; it reads VMNHEMRTPM…TFIVKLGIAD (239 aa). A Phosphohistidine; by autocatalysis modification is found at His-353. Positions 614-731 constitute a Response regulatory domain; it reads KVLVMDDNGV…KMRSVLSELI (118 aa). Residue Asp-662 is modified to 4-aspartylphosphate.

This sequence belongs to the ethylene receptor family. Homodimer; disulfide-linked. It depends on Cu cation as a cofactor. In terms of processing, activation probably requires a transfer of a phosphate group between a His in the transmitter domain and an Asp of the receiver domain. In seeds and placenta.

Its subcellular location is the endoplasmic reticulum membrane. The catalysed reaction is ATP + protein L-histidine = ADP + protein N-phospho-L-histidine.. Functionally, may act early in the ethylene signal transduction pathway, possibly as an ethylene receptor, or as a regulator of the pathway. In Cucumis melo var. cantalupensis (Netted muskmelon), this protein is Ethylene receptor 1 (ETR1).